The chain runs to 185 residues: MSETPSTPTVPAGPEPGPISRWLNKQGFEHQLLDPDHLGVEVIGVESMFLQVIVAALKADGFDYLQCQGGYDEGPGQQLVCFYHLVAMAEMVAKMGVGDSSSEAAKVREVRLKVFLSREDTPSLPSIYGLFRGADWQERETFDMFGINFEGHPHPKRLLMPEDWKGWPLRKDYVQPDFYEMQDAY.

It belongs to the complex I 30 kDa subunit family. NDH-1 can be composed of about 15 different subunits; different subcomplexes with different compositions have been identified which probably have different functions.

Its subcellular location is the cellular thylakoid membrane. The enzyme catalyses a plastoquinone + NADH + (n+1) H(+)(in) = a plastoquinol + NAD(+) + n H(+)(out). It carries out the reaction a plastoquinone + NADPH + (n+1) H(+)(in) = a plastoquinol + NADP(+) + n H(+)(out). Its function is as follows. NDH-1 shuttles electrons from an unknown electron donor, via FMN and iron-sulfur (Fe-S) centers, to quinones in the respiratory and/or the photosynthetic chain. The immediate electron acceptor for the enzyme in this species is believed to be plastoquinone. Couples the redox reaction to proton translocation, and thus conserves the redox energy in a proton gradient. Cyanobacterial NDH-1 also plays a role in inorganic carbon-concentration. This chain is NAD(P)H-quinone oxidoreductase subunit J, found in Prochlorococcus marinus (strain MIT 9303).